Consider the following 392-residue polypeptide: MTQIYHQYKKKLSTKVILLSALTLCITFSLPYANAERYPDVPVAFKYGTGARVDNHLYVGLGSAGQSWYRLDTDKASSGWQKIADFPGQPREQAVTVALSGKLYVFGGVGKNSASDTQVRALDDVYQYDPQTNQWQRLATRAPRGLVGTAATTLNGTQALLLGGVNKAIFDGYFTDLAAAGGNETQKNAVVNAYFDQAPADYFYNRDVLMYDPAKNQWKSGGQVPFLGTAGSAITAKKGDLILINGEIKPGLRTAAVWQGKTQGTELKWQQRPDLIGAEKGAVQEGLAGAFAGVSHDVVLVGGGANFPGSWQQFNAGQLYAHQGLKKQWQQPIYALVDNQWQVAGKLPQPLAYGVSIQDKDKVILLGGETSDGVATSAVTQLSWQGGKLHLE.

The N-terminal stretch at 1–35 (MTQIYHQYKKKLSTKVILLSALTLCITFSLPYANA) is a signal peptide. Kelch repeat units lie at residues 56 to 100 (HLYV…VALS), 102 to 155 (KLYV…TTLN), 157 to 192 (TQAL…AVVN), 193 to 238 (AYFD…TAKK), 241 to 290 (LILI…LAGA), 312 to 361 (QQFN…QDKD), and 363 to 392 (VILL…LHLE). Residue glutamate 247 is the Proton acceptor of the active site.

This sequence belongs to the NanM family. Homodimer.

The protein resides in the periplasm. The enzyme catalyses N-acetyl-alpha-neuraminate = N-acetyl-beta-neuraminate. Functionally, converts alpha-N-acetylneuranimic acid (Neu5Ac) to the beta-anomer, accelerating the equilibrium between the alpha- and beta-anomers. Probably facilitates sialidase-negative bacteria to compete successfully for limited amounts of extracellular Neu5Ac, which is likely taken up in the beta-anomer. In addition, the rapid removal of sialic acid from solution might be advantageous to the bacterium to damp down host responses. This is N-acetylneuraminate epimerase from Yersinia enterocolitica serotype O:8 / biotype 1B (strain NCTC 13174 / 8081).